Here is an 837-residue protein sequence, read N- to C-terminus: Tuftelin-interacting protein 11 (837 aa).

Composition is skewed to basic and acidic residues over residues 1-13 and 53-64; these read MSLS…GEGR and VWAERDSDDERP. Disordered regions lie at residues 1–21, 53–72, and 85–133; these read MSLS…DDER, VWAE…KRAR, and LKKG…KGFA. Phosphoserine is present on residues Ser2, Ser59, and Ser98. The span at 91 to 102 shows a compositional bias: acidic residues; sequence EEAELEDSDDEE. A compositionally biased stretch (basic and acidic residues) spans 103–116; that stretch reads RPVKQDDFPKDFGP. The residue at position 144 (Ser144) is a Phosphoserine. In terms of domain architecture, G-patch spans 149-195; the sequence is TKGIGQKLLQKMGYVPGRGLGKNAQGIINPIEAKQRKGKGAVGAYGS. Residues 179 to 236 form a disordered region; sequence IEAKQRKGKGAVGAYGSERTTQSMQDFPVVDSEEEAEEEFQKGLSQWRKDPSGSKKKP. Ser210 is subject to Phosphoserine. A Nuclear localization signal motif is present at residues 700–705; sequence VKDKFN. Residues 710-734 form a required for nuclear speckle localization region; sequence IMNRAVSSNVGAYMQPGARENIAYL.

This sequence belongs to the TFP11/STIP family. As to quaternary structure, identified in the spliceosome C complex. Found in the Intron Large (IL) complex, a post-mRNA release spliceosomal complex containing the excised intron, U2, U5 and U6 snRNPs, and splicing factors. Interacts with TUFT1. Interacts with DHX15; indicative for a recruitment of DHX15 to the IL complex. Interacts with GCFC2.

Its subcellular location is the cytoplasm. The protein localises to the nucleus. Functionally, involved in pre-mRNA splicing, specifically in spliceosome disassembly during late-stage splicing events. Intron turnover seems to proceed through reactions in two lariat-intron associated complexes termed Intron Large (IL) and Intron Small (IS). In cooperation with DHX15 seems to mediate the transition of the U2, U5 and U6 snRNP-containing IL complex to the snRNP-free IS complex leading to efficient debranching and turnover of excised introns. May play a role in the differentiation of ameloblasts and odontoblasts or in the forming of the enamel extracellular matrix. This is Tuftelin-interacting protein 11 (TFIP11) from Macaca fascicularis (Crab-eating macaque).